The primary structure comprises 251 residues: Probable phosphatase Sputcn32_1369 (251 aa).

Zn(2+) contacts are provided by His8, His10, His16, His41, Glu74, His102, His132, Asp193, and His195.

It belongs to the PHP family. Zn(2+) serves as cofactor.

This chain is Probable phosphatase Sputcn32_1369, found in Shewanella putrefaciens (strain CN-32 / ATCC BAA-453).